We begin with the raw amino-acid sequence, 345 residues long: Protein D345L (345 aa).

Belongs to the asfivirus D345L family. As to quaternary structure, interacts with IKKA/CHUK and IKBKB.

It is found in the host cytoplasm. In terms of biological role, plays a role in the negative regulation of host NF-kappa-B signaling pathway. Mechanistically, recruits host IKKA/CHUK and IKBKB to suppress their kinase activity towards NFKBIA. The polypeptide is Protein D345L (African swine fever virus (strain Badajoz 1971 Vero-adapted) (Ba71V)).